We begin with the raw amino-acid sequence, 241 residues long: Large ribosomal subunit protein uL3 (241 aa).

2 disordered regions span residues 139-164 and 215-241; these read VSHRSIGSTGGRQDPGKTFKNKKMPG and DAPKPGKFRLANGGEEAAAPAAEQEGV. An N5-methylglutamine modification is found at Gln-151. Over residues 225 to 241 the composition is skewed to low complexity; that stretch reads ANGGEEAAAPAAEQEGV.

This sequence belongs to the universal ribosomal protein uL3 family. In terms of assembly, part of the 50S ribosomal subunit. Forms a cluster with proteins L14 and L19. In terms of processing, methylated by PrmB.

In terms of biological role, one of the primary rRNA binding proteins, it binds directly near the 3'-end of the 23S rRNA, where it nucleates assembly of the 50S subunit. The sequence is that of Large ribosomal subunit protein uL3 from Rhodopseudomonas palustris (strain HaA2).